The following is a 1525-amino-acid chain: Receptor-type guanylate cyclase Gyc76C (1525 aa).

A signal peptide spans 1 to 19 (MTRWPFNLLLLLSVAVRDC). At 20–493 (SNHRTVLTVG…KKDDTHYTST (474 aa)) the chain is on the extracellular side. Residues asparagine 74, asparagine 184, asparagine 222, asparagine 338, asparagine 383, asparagine 394, asparagine 416, asparagine 428, and asparagine 458 are each glycosylated (N-linked (GlcNAc...) asparagine). Residues 494–514 (VAAVVLGVLLFCSGVITMSIY) form a helical membrane-spanning segment. At 515 to 1525 (RKWKIELEIE…AAARDRESIV (1011 aa)) the chain is on the cytoplasmic side. Positions 547-824 (PSKVSLMSAQ…SVIRNRLKKM (278 aa)) constitute a Protein kinase domain. ATP is bound by residues 553–561 (MSAQSYGSR) and lysine 581. The 131-residue stretch at 896–1026 (TIYFSDIVGF…DTVNTASRME (131 aa)) folds into the Guanylate cyclase domain. Aspartate 901, isoleucine 902, and aspartate 945 together coordinate Mg(2+). Disordered stretches follow at residues 1122 to 1168 (GSRR…NGLG), 1192 to 1217 (ETNE…LVRQ), and 1256 to 1308 (ESRS…VHSS). The span at 1147 to 1162 (ESPRMVSKRDRDRERP) shows a compositional bias: basic and acidic residues. The span at 1202-1212 (GGSGGVSGSGS) shows a compositional bias: gly residues. Positions 1282–1308 (LSKNNSRSLDTGVSLISGNPNGEVHSS) are enriched in polar residues.

The protein belongs to the adenylyl cyclase class-4/guanylyl cyclase family. As to quaternary structure, interacts with the semaphorin 1A receptor PlexA; PlexA enhances Gyc76C catalytic activity. Interacts with the PDZ domain-containing protein kermit; kermit increases cell surface expression of Gyc76C. As to expression, in the adult, widely distributed in the head and thorax with highest levels in the optic lobe and central brain and expression also detected in the retina. Expressed at similar levels in adult head and body. In females, highly expressed in oocytes with lower levels in the digestive tract. In mid-embryogenesis, enriched in the circular visceral mesoderm that overlies the migrating salivary gland and in the fat body that underlies the gland but at background levels in the gland itself. In late embryogenesis, detected in the mature salivary gland, in the somatic body wall muscles and the tendon cells to which the muscles attach, and in the constricting midgut. Also expressed in migrating tracheal cells at mid-embryogenesis and in the developed trachea at the end of embryogenesis with enrichment in the apical domains.

It is found in the cell membrane. The catalysed reaction is GTP = 3',5'-cyclic GMP + diphosphate. Its function is as follows. Guanylate cyclase involved in the production of the second messenger cGMP. Acts as a receptor for the NPLP1-4 peptide and modulates the innate immune IMD pathway in response to salt stress by inducing nuclear translocation of NF-kappa-B protein Rel which leads to increased expression of the antimicrobial peptide diptericin. Plays a role in Sema-1a-mediated axon repulsion which is required for the correct establishment of neuromuscular connectivity. Required in developing embryonic somatic muscle for correct patterning of ventral and lateral muscles and for localization of integrin beta-ps at developing dorsal muscle myotendinous junctions. Required for invagination, migration and lumen shape of the embryonic salivary gland by regulating the localization of the integrin-binding protein rhea/Talin to the visceral mesoderm surrounding the gland and maintaining the laminin matrix. Required in the developing wing to regulate extracellular matrix (ECM) organization by activating the cGMP-dependent protein kinase For which represses the activity of matrix metalloproteases such as Mmp2 and decreases ECM matrix reorganization. In Drosophila melanogaster (Fruit fly), this protein is Receptor-type guanylate cyclase Gyc76C.